A 969-amino-acid chain; its full sequence is Alanine--tRNA ligase (969 aa).

The N-terminal 8 residues, 1–8, are a transit peptide targeting the mitochondrion; sequence MIKTLLRR. Histidine 616, histidine 620, cysteine 735, and histidine 739 together coordinate Zn(2+).

It belongs to the class-II aminoacyl-tRNA synthetase family. As to quaternary structure, monomer. It depends on Zn(2+) as a cofactor.

The protein localises to the mitochondrion. Its subcellular location is the cytoplasm. It carries out the reaction tRNA(Ala) + L-alanine + ATP = L-alanyl-tRNA(Ala) + AMP + diphosphate. Catalyzes the attachment of alanine to tRNA(Ala) in a two-step reaction: alanine is first activated by ATP to form Ala-AMP and then transferred to the acceptor end of tRNA(Ala). Also edits incorrectly charged tRNA(Ala) via its editing domain. The chain is Alanine--tRNA ligase from Candida albicans (strain SC5314 / ATCC MYA-2876) (Yeast).